A 390-amino-acid polypeptide reads, in one-letter code: ATP-sensitive inward rectifier potassium channel 11 (390 aa).

The Cytoplasmic portion of the chain corresponds to Met1–Asp65. Residues Asn48 and Arg50 each coordinate ATP. Residues Leu66–Leu92 form a helical membrane-spanning segment. The Extracellular portion of the chain corresponds to Ile93 to Ser116. A disulfide bridge connects residues Cys110 and Cys142. The discontinuously helical; Pore-forming intramembrane region spans Phe117–Phe133. K(+) contacts are provided by Thr130 and Phe133. The short motif at Thr130 to Gly135 is the Selectivity filter element. The Extracellular segment spans residues Gly134–Cys142. The helical transmembrane segment at Pro143–Thr171 threads the bilayer. The Cytoplasmic portion of the chain corresponds to Ala172–Ser390. Residue Arg176 participates in a 1,2-diacyl-sn-glycero-3-phospho-(1D-myo-inositol-4,5-bisphosphate) binding. Tyr330 provides a ligand contact to ATP. Thr341 carries the post-translational modification Phosphothreonine; by MAPK1. Ser385 is subject to Phosphoserine; by MAPK1.

The protein belongs to the inward rectifier-type potassium channel (TC 1.A.2.1) family. KCNJ11 subfamily. As to quaternary structure, homotetramer; the homotetramer binds four ATP molecules (one ATP per subunit). Forms an heterooctamer with ABCC8/SUR1; one KCNJ11 homotetramer interacts with four ABCC8/SUR1 molecules. Interacts with ABCC9/SUR2. Post-translationally, phosphorylation by MAPK1 results in changes in channel gating that destabilize the closed states and reduce the ATP sensitivity.

It localises to the membrane. The enzyme catalyses K(+)(in) = K(+)(out). Its activity is regulated as follows. KATP channels are regulated by cytoplasmic ATP/ADP ratios; ATP inhibits the channel by closing the pore, while ADP activates the channel. Activated by phosphatidylinositol 4,5-biphosphate (PtdIns(4,5)P2). Inward rectifier potassium channel that forms the pore of ATP-sensitive potassium channels (KATP), regulating potassium permeability as a function of cytoplasmic ATP and ADP concentrations in many different cells. Inward rectifier potassium channels are characterized by a greater tendency to allow potassium to flow into the cell rather than out of it. Their voltage dependence is regulated by the concentration of extracellular potassium; as external potassium is raised, the voltage range of the channel opening shifts to more positive voltages. The inward rectification is mainly due to the blockage of outward current by internal magnesium. Can be blocked by extracellular barium. In pancreatic cells, it forms KATP channels with ABCC8/SUR1. Can form cardiac and smooth muscle-type KATP channels with ABCC9. The sequence is that of ATP-sensitive inward rectifier potassium channel 11 (KCNJ11) from Oryctolagus cuniculus (Rabbit).